Here is a 325-residue protein sequence, read N- to C-terminus: Phospholipid phosphatase-related protein type 1 (325 aa).

A glycan (N-linked (GlcNAc...) asparagine) is linked at asparagine 5. A run of 3 helical transmembrane segments spans residues 13–33, 67–87, and 127–147; these read IIPCFIFVELVIMAGTVLLAY, FISPLVLYCVLAATPTAIIFI, and FIGVFAFGLFATDIFVNAGQV. Asparagine 163 carries an N-linked (GlcNAc...) asparagine glycan. Helical transmembrane passes span 201-218, 230-247, and 257-277; these read AALSIYSALYATMYITST, VLCLGTLCTAFLTGLNRV, and VIAGFILGTAVALFLGMCVVH. Serine 307 is modified (phosphoserine). Asparagine 316 is a glycosylation site (N-linked (GlcNAc...) asparagine).

It belongs to the PA-phosphatase related phosphoesterase family.

Its subcellular location is the cell membrane. The protein resides in the cell projection. The protein localises to the neuron projection. In terms of biological role, may play a role in neurite outgrowth and neurogenesis. This is Phospholipid phosphatase-related protein type 1 from Mus musculus (Mouse).